The sequence spans 268 residues: MAVLDVSYGERAKVHASPVARRLFELMEKKQSNLCASIDVSSTDELLKLVEKLGPVICLVKTHIDTIDDFSYDGTILPLVELSKKYNFMIFEDRKFADIGNTVKNQYKNGIFKIAQWADITNAHGVTGEGIVKGLKEAALETTLEPRGLLMLAELSSKGSLAYGEYTNKTVEIAKSDKDFVIGFIAQHDMGGREEGFDWIIMTPGVGLDDKGDKLGQQYRTVDQVIDSGSDIIIVGRGLFGKGRDPVLQGERYRKAGWDAYLKRIGQL.

Substrate-binding positions include D39, 61–63 (KTH), 93–102 (DRKFADIGNT), Y219, and R237. K95 functions as the Proton donor in the catalytic mechanism.

The protein belongs to the OMP decarboxylase family.

It carries out the reaction orotidine 5'-phosphate + H(+) = UMP + CO2. It participates in pyrimidine metabolism; UMP biosynthesis via de novo pathway; UMP from orotate: step 2/2. This Pachysolen tannophilus (Yeast) protein is Orotidine 5'-phosphate decarboxylase (URA3).